The following is a 480-amino-acid chain: ATP-dependent rRNA helicase RRP3 (480 aa).

2 stretches are compositionally biased toward basic and acidic residues: residues 1-17 (MAKATEKRVKRAKKEES) and 33-46 (DTTKSDNEEEEPKK). A disordered region spans residues 1-63 (MAKATEKRVK…VEVDESEEQT (63 aa)). Positions 64–92 (KTFKDLGVIDSICETCEELKFTKPTPIQA) match the Q motif motif. Residues 95–266 (IPYALEGRDI…RASLVDPVRV (172 aa)) enclose the Helicase ATP-binding domain. Residue 108–115 (AQTGSGKT) coordinates ATP. Positions 214-217 (DEAD) match the DEAD box motif. Positions 277-437 (NLLQYMVFCP…SYPLESEAVM (161 aa)) constitute a Helicase C-terminal domain. Residues 450 to 480 (AIQEMKGEDGTKKRSKFDKKRRRDEMDIGEQ) are disordered. The span at 462–471 (KRSKFDKKRR) shows a compositional bias: basic residues.

The protein belongs to the DEAD box helicase family. DDX47/RRP3 subfamily. Interacts with the SSU processome.

The protein resides in the nucleus. The catalysed reaction is ATP + H2O = ADP + phosphate + H(+). Functionally, ATP-dependent rRNA helicase required for pre-ribosomal RNA processing. Involved in the maturation of the 35S-pre-rRNA and to its cleavage to mature 18S rRNA. The chain is ATP-dependent rRNA helicase RRP3 from Yarrowia lipolytica (strain CLIB 122 / E 150) (Yeast).